The sequence spans 139 residues: Small ribosomal subunit protein uS12 (139 aa).

The protein belongs to the universal ribosomal protein uS12 family. As to quaternary structure, part of the 30S ribosomal subunit. Contacts proteins S8 and S17. May interact with IF1 in the 30S initiation complex.

In terms of biological role, with S4 and S5 plays an important role in translational accuracy. Its function is as follows. Interacts with and stabilizes bases of the 16S rRNA that are involved in tRNA selection in the A site and with the mRNA backbone. Located at the interface of the 30S and 50S subunits, it traverses the body of the 30S subunit contacting proteins on the other side and probably holding the rRNA structure together. The combined cluster of proteins S8, S12 and S17 appears to hold together the shoulder and platform of the 30S subunit. The polypeptide is Small ribosomal subunit protein uS12 (Mycoplasma pneumoniae (strain ATCC 29342 / M129 / Subtype 1) (Mycoplasmoides pneumoniae)).